A 1957-amino-acid chain; its full sequence is MGENEDEKQAQAGQVFENFVQASTCKGTLQAFNILTRHLDLDPLDHRNFYSKLKSKVTTWKAKALWYKLDKRGSHKEYKRGKSCTNTKCLIVGGGPCGLRTAIELAYLGAKVVVVEKRDSFSRNNVLHLWPFTIHDLRGLGAKKFYGKFCAGSIDHISIRQLQLILFKVALMLGVEIHVNVEFVKVLEPPEDQENQKIGWRAEFLPTDHSLSEFEFDVIIGADGRRNTLEGFRRKEFRGKLAIAITANFINRNSTAEAKVEEISGVAFIFNQKFFQDLKEETGIDLENIVYYKDCTHYFVMTAKKQSLLDKGVIINDYIDTEMLLCAENVNQDNLLSYAREAADFATNYQLPSLDFAMNHYGQPDVAMFDFTCMYASENAALVRERQAHQLLVALVGDSLLEPFWPMGTGCARGFLAAFDTAWMVKSWNQGTPPLELLAERESLYRLLPQTTPENINKNFEQYTLDPGTRYPNLNSHCVRPHQVKHLYITKELEHYPLERLGSVRRSVNLSRKESDIRPSKLLTWCQQQTEGYQHVNVTDLTTSWRSGLALCAIIHRFRPELINFDSLNEDDAVENNQLAFDVAEREFGIPPVTTGKEMASAQEPDKLSMVMYLSKFYELFRGTPLRPVDSWRKNYGENADLSLAKSSISNNYLNLTFPRKRTPRVDGQTGENDMNKRRRKGFTNLDEPSNFSSRSLGSNQECGSSKEGGNQNKVKSMANQLLAKFEESTRNPSLMKQERRVSGIGKPVLCSSSGPPVHSCCPKPEEATPSPSPPLKRQFPSVVVTGHVLRELKQVSAGSECLSRPWRARAKSDLQLGGTENFATLPSTRPRAQALSGVLWRLQQVEEKILQKRAQNLANREFHTKNIKEKAAHLASMFGHGDFPQNKLLSKGLSHTHPPSPPSRLPSPDPAASSSPSTVDSASPARKEKKSPSGFHFHPSHLRTVHPQLTVGKVSSGIGAAAEVLVNLYMNDHRPKAQATSPDLESMRKSFPLNLGGSDTCYFCKKRVYVMERLSAEGHFFHRECFRCSICATTLRLAAYTFDCDEGKFYCKPHFIHCKTNSKQRKRRAELKQQREEEATWQEQEAPRRDTPTESSCAVAAIGTLEGSPPDEPTSPKRPKSISEPQHSDAEGDAASPLPSEWTSVRISPGEEAAGQDVLAVRVLVTSEDSSSDTESDYGGSEGSHTEPCEEKPWRPGSPHLPHTSLGEALSRAVSPQCPEEPRAVHAALQRANSFQSPTPSKYQNWRREFWWSLTPVNKRTMSPPKDPSPSLPLPSSSSHSSSPPSSSSTSVSGNAPDGSSPPQMTASEPLSQVSRGHPSPPTPNFRRRAVAQGAPREIPLYLPHHPKPEWAEYCLVSPGEDGLSDPAEMTSDECQPAEAPLGDIGSNHRDPHPIWGKDRSWTGQELSPLAGEDREKGSTGARKEEEGGPVLVKEKLGLKKLVLTQEQKTMLLDWNDSIPESVHLKAGERISQKSAENGRGGRVLKPVRPLLLPRAAGEPLPTQRGAQEKMGTPAEQAQGERNVPPPKSPLRLIANAIRRSLEPLLSNSEGGKKAWAKQESKTLPAQACTRSFSLRKTNSNKDGDQHSPGRNQSSAFSPPDPALRTHSLPNRPSKVFPALRSPPCSKIEDVPTLLEKVSLQENFPDASKPPKKRISLFSSLRLKDKSFESFLQESRQRKDIRDLFGSPKRKVLPEDSAQALEKLLQPFKSTSLRQAAPPPPPPPPPPPPPPTAGGADSKNFPLRAQVTEASSSASSTSSSSADEEFDPQLSLQLKEKKTLRRRKKLEKAMKQLVKQEELKRLYKAQAIQRQLEEVEERQRASEIQGVRLEKALRGEADSGTQDEAQLLQEWFKLVLEKNKLMRYESELLIMAQELELEDHQSRLEQKLREKMLKEESQKDEKDLNEEQEVFTELMQVIEQRDKLVDSLEEQRIREKAEDQHFESFVFSRGCQLSRT.

The tract at residues 2–494 (GENEDEKQAQ…KHLYITKELE (493 aa)) is monooxygenase domain. Residues Cys-97, 116-118 (EKR), 123-125 (RNN), Phe-183, Tyr-298, and Asp-398 contribute to the FAD site. A Calponin-homology (CH) domain is found at 516–619 (DIRPSKLLTW…MVMYLSKFYE (104 aa)). Ser-631 is subject to Phosphoserine. A Nuclear localization signal motif is present at residues 660–681 (RKRTPRVDGQTGENDMNKRRRK). Disordered stretches follow at residues 660–714 (RKRT…NQNK) and 886–942 (QNKL…HPSH). The segment covering 687-714 (DEPSNFSSRSLGSNQECGSSKEGGNQNK) has biased composition (polar residues). Pro residues predominate over residues 899-910 (PPSPPSRLPSPD). Low complexity predominate over residues 911–925 (PAASSSPSTVDSASP). An LIM zinc-binding domain is found at 1000–1062 (DTCYFCKKRV…KPHFIHCKTN (63 aa)). The Zn(2+) site is built by Cys-1002, Cys-1005, His-1023, Cys-1026, Cys-1029, Cys-1032, Cys-1052, and His-1055. Disordered stretches follow at residues 1070 to 1143 (AELK…PSEW), 1168 to 1243 (SEDS…TPSK), 1258 to 1345 (VNKR…LYLP), 1361 to 1431 (GEDG…EGGP), 1467 to 1626 (KAGE…SPPC), and 1675 to 1779 (ESRQ…KEKK). Basic and acidic residues predominate over residues 1185-1195 (SHTEPCEEKPW). The span at 1232 to 1243 (RANSFQSPTPSK) shows a compositional bias: polar residues. Over residues 1275–1294 (LPSSSSHSSSPPSSSSTSVS) the composition is skewed to low complexity. Positions 1302-1316 (SPPQMTASEPLSQVS) are enriched in polar residues. An interaction with MAPK1 region spans residues 1324 to 1363 (TPNFRRRAVAQGAPREIPLYLPHHPKPEWAEYCLVSPGED). 2 stretches are compositionally biased toward basic and acidic residues: residues 1388–1402 (SNHRDPHPIWGKDRS) and 1413–1431 (GEDREKGSTGARKEEEGGP). Positions 1485–1496 (VLKPVRPLLLPR) are enriched in low complexity. Positions 1552–1562 (GGKKAWAKQES) are enriched in basic and acidic residues. Over residues 1570–1579 (CTRSFSLRKT) the composition is skewed to polar residues. Ser-1688 is modified (phosphoserine). A compositionally biased stretch (pro residues) spans 1718-1733 (APPPPPPPPPPPPPPT). The span at 1751–1762 (ASSSASSTSSSS) shows a compositional bias: low complexity. Residues 1796-1945 (KQEELKRLYK…EKAEDQHFES (150 aa)) form the bMERB domain.

The protein belongs to the Mical family. Interacts with PLXNA4. Interacts with RAB1B. Interacts with MAPK1/ERK2. Interacts with RAB35, RAB8A, RAB10, RAB13 and RAB15 (in their GTP-bound forms); binding to RAB35 is of low affinity compared to other Rab proteins; at least in case of RAB8A may bind 2 molecules of RAB8A simultaneously through a high and a low affinity binding site, respectively. May interact with MAPK1/ERK2. Interacts with CORO1C; this interaction recruits MICAL2 to the actin filaments. It depends on FAD as a cofactor.

It localises to the nucleus. The protein localises to the cytoplasm. The enzyme catalyses L-methionyl-[F-actin] + NADPH + O2 + H(+) = L-methionyl-(R)-S-oxide-[F-actin] + NADP(+) + H2O. Specifically inhibited by CCG-1423, a small molecule inhibitor of SRF:MKL1/MRTF-A-dependent transcription. In terms of biological role, methionine monooxygenase that promotes depolymerization of F-actin by mediating oxidation of residues 'Met-44' and 'Met-47' on actin to form methionine-sulfoxide, resulting in actin filament disassembly and preventing repolymerization. Regulates the disassembly of branched actin networks also by oxidizing ARP3B-containing ARP2/3 complexes leading to ARP3B dissociation from the network. Acts as a key regulator of the SRF signaling pathway elicited by nerve growth factor and serum: mediates oxidation and subsequent depolymerization of nuclear actin, leading to increase MKL1/MRTF-A presence in the nucleus and promote SRF:MKL1/MRTF-A-dependent gene transcription. Does not activate SRF:MKL1/MRTF-A through RhoA. The polypeptide is [F-actin]-monooxygenase MICAL2 (Homo sapiens (Human)).